Reading from the N-terminus, the 307-residue chain is Elongation factor Ts (307 aa).

The segment at 80 to 83 (TDFV) is involved in Mg(2+) ion dislocation from EF-Tu.

Belongs to the EF-Ts family.

Its subcellular location is the cytoplasm. Functionally, associates with the EF-Tu.GDP complex and induces the exchange of GDP to GTP. It remains bound to the aminoacyl-tRNA.EF-Tu.GTP complex up to the GTP hydrolysis stage on the ribosome. This is Elongation factor Ts from Methylobacterium sp. (strain 4-46).